Consider the following 526-residue polypeptide: WRKY transcription factor 72A (526 aa).

Composition is skewed to basic and acidic residues over residues 40–52 (KERK…DDNS) and 60–76 (LTGD…KADM). 2 disordered regions span residues 40–76 (KERK…KADM) and 170–200 (SSTK…QTWP). The stretch at 62–106 (GDKKDDQLESAKADMEEVMEENQRLKKHLDKIMKDYRNLQMQFHE) forms a coiled coil. The span at 170–185 (SSTKSSPSNLSPENSL) shows a compositional bias: low complexity. Residues 232–298 (CDTPTMNDGC…YEGTHNHPLP (67 aa)) constitute a DNA-binding region (WRKY).

This sequence belongs to the WRKY group II-b family. In terms of tissue distribution, expressed in roots, trichomes and fruits.

The protein resides in the nucleus. Functionally, transcription activator involved in the transcriptional regulation of terpene biosynthesis in glandular trichomes. Binds to the promoter of the linalool synthase TPS5 and promotes TPS5 gene transactivation. In association with WRKY72B, contributes to basal defense against root-knot nematodes (RKNs) and potato aphids, as well as Mi-1-mediated gene-for-gene resistance to these pests. Both WRKY72A and WRKY72B are not required for gene-for-gene resistance mediated by Pto, another tomato R gene. The chain is WRKY transcription factor 72A from Solanum lycopersicum (Tomato).